The sequence spans 192 residues: MAAQIPIVATTSTPGIVRNSKKRPASPSHNGSSGGGYGASKKKKASASSFAQGISMEAMSENKMVPSEFSTGPVEKAAKPLPFKDPNFVHSGHGGAVAGKKNRTWKNLKQILASERALPWQLNDPNYFSIDAPPSFKPAKKYSDVSGLLANYTDPQSKLRFSTIEEFSYIRRLPSDVVTGYLALRKATSIVP.

The interval 1-44 (MAAQIPIVATTSTPGIVRNSKKRPASPSHNGSSGGGYGASKKKK) is disordered.

In terms of assembly, component of the chromatin remodeling INO80 complex; specifically part of a complex module associated with the helicase ATP-binding and the helicase C-terminal domain of INO80. Component of some MLL1/MLL complex, at least composed of the core components KMT2A/MLL1, ASH2L, HCFC1/HCF1, WDR5 and RBBP5, as well as the facultative components BACC1, CHD8, E2F6, HSP70, INO80C, KANSL1, LAS1L, MAX, MCRS1, MGA, MYST1/MOF, PELP1, PHF20, PRP31, RING2, RUVB1/TIP49A, RUVB2/TIP49B, SENP3, TAF1, TAF4, TAF6, TAF7, TAF9 and TEX10.

It localises to the nucleus. Its function is as follows. Proposed core component of the chromatin remodeling INO80 complex which is involved in transcriptional regulation, DNA replication and probably DNA repair. This chain is INO80 complex subunit C (INO80C), found in Homo sapiens (Human).